The chain runs to 379 residues: 3-dehydroquinate synthase (379 aa).

NAD(+) contacts are provided by residues 113–117 (GVIGD), 137–138 (TS), Lys150, and Lys159. Positions 192, 256, and 274 each coordinate Zn(2+).

The protein belongs to the sugar phosphate cyclases superfamily. Dehydroquinate synthase family. Requires Co(2+) as cofactor. It depends on Zn(2+) as a cofactor. The cofactor is NAD(+).

It is found in the cytoplasm. The catalysed reaction is 7-phospho-2-dehydro-3-deoxy-D-arabino-heptonate = 3-dehydroquinate + phosphate. Its pathway is metabolic intermediate biosynthesis; chorismate biosynthesis; chorismate from D-erythrose 4-phosphate and phosphoenolpyruvate: step 2/7. Catalyzes the conversion of 3-deoxy-D-arabino-heptulosonate 7-phosphate (DAHP) to dehydroquinate (DHQ). In Zymomonas mobilis subsp. mobilis (strain ATCC 31821 / ZM4 / CP4), this protein is 3-dehydroquinate synthase.